We begin with the raw amino-acid sequence, 186 residues long: Elongation factor P (186 aa).

It belongs to the elongation factor P family.

The protein localises to the cytoplasm. Its pathway is protein biosynthesis; polypeptide chain elongation. Functionally, involved in peptide bond synthesis. Stimulates efficient translation and peptide-bond synthesis on native or reconstituted 70S ribosomes in vitro. Probably functions indirectly by altering the affinity of the ribosome for aminoacyl-tRNA, thus increasing their reactivity as acceptors for peptidyl transferase. This Brucella abortus (strain S19) protein is Elongation factor P.